We begin with the raw amino-acid sequence, 500 residues long: Proline/betaine transporter (500 aa).

The Cytoplasmic segment spans residues 1–37; it reads MLKRKKIKPITLGDVTIIDDGKLRKAITAASLGNAME. Residues 38–58 traverse the membrane as a helical segment; that stretch reads WFDFGVYGFVAYALGKVFFPG. Over 59–65 the chain is Periplasmic; that stretch reads ADPSVQM. Residues 66–86 form a helical membrane-spanning segment; the sequence is IAALATFSVPFLIRPLGGLFF. Residues 87–97 lie on the Cytoplasmic side of the membrane; that stretch reads GMLGDKYGRQK. Residues 98 to 118 form a helical membrane-spanning segment; sequence ILAITIVIMSISTFCIGLIPS. The Periplasmic portion of the chain corresponds to 119 to 121; the sequence is YAT. The helical transmembrane segment at 122 to 142 threads the bilayer; it reads IGIWAPILLLLCKMAQGFSVG. Residues 143 to 169 are Cytoplasmic-facing; that stretch reads GEYTGASIFVAEYSPDRKRGFMGSWLD. A helical transmembrane segment spans residues 170–190; it reads FGSIAGFVLGAGVVVLISTIV. Residues 191 to 194 are Periplasmic-facing; the sequence is GEEN. The chain crosses the membrane as a helical span at residues 195–215; the sequence is FLEWGWRIPFFIALPLGIIGL. Over 216 to 260 the chain is Cytoplasmic; sequence YLRHALEETPAFQQHVDKLEQGDREGLQDGPKVSFKEIATKHWRS. Residues 261-281 form a helical membrane-spanning segment; sequence LLSCIGLVIATNVTYYMLLTY. The Periplasmic portion of the chain corresponds to 282–297; sequence MPSYLSHNLHYSEDHG. Residues 298 to 318 traverse the membrane as a helical segment; sequence VLIIIAIMIGMLFVQPVMGLL. Residues 319-325 are Cytoplasmic-facing; that stretch reads SDRFGRR. The helical transmembrane segment at 326–346 threads the bilayer; sequence PFVIMGSIALFALAIPAFILI. At 347–350 the chain is on the periplasmic side; the sequence is NSNV. Residues 351-371 traverse the membrane as a helical segment; sequence IGLIFAGLLMLAVILNCFTGV. Topologically, residues 372–390 are cytoplasmic; sequence MASTLPAMFPTHIRYSALA. Residues 391 to 411 form a helical membrane-spanning segment; that stretch reads AAFNISVLIAGLTPTLAAWLV. Topologically, residues 412–416 are periplasmic; that stretch reads ESSQD. A helical membrane pass occupies residues 417-437; sequence LMMPAYYLMVIAVIGLITGIS. At 438 to 500 the chain is on the cytoplasmic side; that stretch reads MKETANRPLK…LVQQHPRIDE (63 aa). The stretch at 453–498 forms a coiled coil; that stretch reads ASDIQEAKEILGEHYDNIEQKIDDIDQEIAELQVKRSRLVQQHPRI.

Belongs to the major facilitator superfamily. Metabolite:H+ Symporter (MHS) family (TC 2.A.1.6) family.

Its subcellular location is the cell inner membrane. Its function is as follows. Proton symporter that senses osmotic shifts and responds by importing osmolytes such as proline, glycine betaine, stachydrine, pipecolic acid, ectoine and taurine. It is both an osmosensor and an osmoregulator which is available to participate early in the bacterial osmoregulatory response. This Salmonella typhimurium (strain LT2 / SGSC1412 / ATCC 700720) protein is Proline/betaine transporter (proP).